The chain runs to 484 residues: Transcription factor TGAL4 (484 aa).

The segment covering 1-11 (MGEASSSSGHP) has biased composition (polar residues). Disordered stretches follow at residues 1–22 (MGEA…GYGF), 84–137 (ATAA…NASS), and 155–181 (QQEQ…DPKT). Over residues 123 to 137 (SESSSKNNSNQNASS) the composition is skewed to low complexity. Residues 163-173 (ATNSPTHSSKT) show a composition bias toward polar residues. The region spanning 178-222 (DPKTMRRLAQNREAARKSRLRKKAYIQQLESSKLKLAQMEQDIHR) is the bZIP domain. Residues 180 to 200 (KTMRRLAQNREAARKSRLRKK) are basic motif. The leucine-zipper stretch occupies residues 206–220 (LESSKLKLAQMEQDI). Residues 241–455 (AAMFDVDYAR…RALSSLWASR (215 aa)) enclose the DOG1 domain.

Belongs to the bZIP family. As to quaternary structure, interacts with NPR1/NH1 and NPR3/NH3.

The protein resides in the nucleus. Functionally, transcriptional regulator involved in defense response. This Oryza sativa subsp. japonica (Rice) protein is Transcription factor TGAL4.